The primary structure comprises 172 residues: 3-hydroxydecanoyl-[acyl-carrier-protein] dehydratase (172 aa).

His-71 is an active-site residue.

Belongs to the thioester dehydratase family. FabA subfamily. Homodimer.

It localises to the cytoplasm. The enzyme catalyses a (3R)-hydroxyacyl-[ACP] = a (2E)-enoyl-[ACP] + H2O. It carries out the reaction (3R)-hydroxydecanoyl-[ACP] = (2E)-decenoyl-[ACP] + H2O. The catalysed reaction is (2E)-decenoyl-[ACP] = (3Z)-decenoyl-[ACP]. Its pathway is lipid metabolism; fatty acid biosynthesis. Functionally, necessary for the introduction of cis unsaturation into fatty acids. Catalyzes the dehydration of (3R)-3-hydroxydecanoyl-ACP to E-(2)-decenoyl-ACP and then its isomerization to Z-(3)-decenoyl-ACP. Can catalyze the dehydratase reaction for beta-hydroxyacyl-ACPs with saturated chain lengths up to 16:0, being most active on intermediate chain length. The protein is 3-hydroxydecanoyl-[acyl-carrier-protein] dehydratase of Aliivibrio fischeri (strain ATCC 700601 / ES114) (Vibrio fischeri).